Consider the following 598-residue polypeptide: tRNA(Met) cytidine acetyltransferase TmcA (598 aa).

Residues Gln-141, 163–172 (GRGKSTLAGK), and Arg-288 contribute to the ATP site. In terms of domain architecture, N-acetyltransferase spans 332-490 (TDLRRLFDAD…HSAMMLYPLS (159 aa)). Acetyl-CoA contacts are provided by residues 411–413 (IAV), 418–424 (QNQGIGS), and Arg-462.

Belongs to the RNA cytidine acetyltransferase family. TmcA subfamily.

It localises to the cytoplasm. It carries out the reaction cytidine(34) in elongator tRNA(Met) + acetyl-CoA + ATP + H2O = N(4)-acetylcytidine(34) in elongator tRNA(Met) + ADP + phosphate + CoA + H(+). Its function is as follows. Catalyzes the formation of N(4)-acetylcytidine (ac(4)C) at the wobble position of tRNA(Met), by using acetyl-CoA as an acetyl donor and ATP (or GTP). In Haemophilus ducreyi (strain 35000HP / ATCC 700724), this protein is tRNA(Met) cytidine acetyltransferase TmcA.